The sequence spans 195 residues: dTTP/UTP pyrophosphatase (195 aa).

The active-site Proton acceptor is Asp73.

It belongs to the Maf family. YhdE subfamily. A divalent metal cation serves as cofactor.

It localises to the cytoplasm. The enzyme catalyses dTTP + H2O = dTMP + diphosphate + H(+). The catalysed reaction is UTP + H2O = UMP + diphosphate + H(+). Its function is as follows. Nucleoside triphosphate pyrophosphatase that hydrolyzes dTTP and UTP. May have a dual role in cell division arrest and in preventing the incorporation of modified nucleotides into cellular nucleic acids. This Deinococcus radiodurans (strain ATCC 13939 / DSM 20539 / JCM 16871 / CCUG 27074 / LMG 4051 / NBRC 15346 / NCIMB 9279 / VKM B-1422 / R1) protein is dTTP/UTP pyrophosphatase.